Consider the following 345-residue polypeptide: Methylthioribose-1-phosphate isomerase (345 aa).

Residues 47-49 (RGA), R90, and Q197 each bind substrate. The active-site Proton donor is D238. Position 248–249 (248–249 (NK)) interacts with substrate.

The protein belongs to the eIF-2B alpha/beta/delta subunits family. MtnA subfamily.

It carries out the reaction 5-(methylsulfanyl)-alpha-D-ribose 1-phosphate = 5-(methylsulfanyl)-D-ribulose 1-phosphate. The protein operates within amino-acid biosynthesis; L-methionine biosynthesis via salvage pathway; L-methionine from S-methyl-5-thio-alpha-D-ribose 1-phosphate: step 1/6. Functionally, catalyzes the interconversion of methylthioribose-1-phosphate (MTR-1-P) into methylthioribulose-1-phosphate (MTRu-1-P). The protein is Methylthioribose-1-phosphate isomerase of Thermoanaerobacter pseudethanolicus (strain ATCC 33223 / 39E) (Clostridium thermohydrosulfuricum).